We begin with the raw amino-acid sequence, 249 residues long: DNA polymerase sliding clamp 1 (249 aa).

The protein belongs to the PCNA family. As to quaternary structure, homotrimer. The subunits circularize to form a toroid; DNA passes through its center. Replication factor C (RFC) is required to load the toroid on the DNA. Interacts with TIP.

With respect to regulation, inhibited by interaction with the PCNA inhibitor TIP. In terms of biological role, sliding clamp subunit that acts as a moving platform for DNA processing. Responsible for tethering the catalytic subunit of DNA polymerase and other proteins to DNA during high-speed replication. In Thermococcus kodakarensis (strain ATCC BAA-918 / JCM 12380 / KOD1) (Pyrococcus kodakaraensis (strain KOD1)), this protein is DNA polymerase sliding clamp 1.